Consider the following 353-residue polypeptide: Methylthioribose-1-phosphate isomerase (353 aa).

Residues 51–53 (RGA), Arg-94, and Gln-199 contribute to the substrate site. The active-site Proton donor is the Asp-240. 250 to 251 (NK) provides a ligand contact to substrate.

The protein belongs to the eIF-2B alpha/beta/delta subunits family. MtnA subfamily. In terms of assembly, homodimer.

The catalysed reaction is 5-(methylsulfanyl)-alpha-D-ribose 1-phosphate = 5-(methylsulfanyl)-D-ribulose 1-phosphate. Its pathway is amino-acid biosynthesis; L-methionine biosynthesis via salvage pathway; L-methionine from S-methyl-5-thio-alpha-D-ribose 1-phosphate: step 1/6. Its function is as follows. Catalyzes the interconversion of methylthioribose-1-phosphate (MTR-1-P) into methylthioribulose-1-phosphate (MTRu-1-P). This is Methylthioribose-1-phosphate isomerase from Bacillus pumilus (strain SAFR-032).